Reading from the N-terminus, the 67-residue chain is Protein AaeX (67 aa).

The next 2 helical transmembrane spans lie at 9-29 (IFGL…ALFF) and 47-67 (PALF…CLFV).

This sequence belongs to the AaeX family.

Its subcellular location is the cell membrane. This is Protein AaeX from Serratia marcescens.